An 815-amino-acid polypeptide reads, in one-letter code: Capsid vertex component 1 (815 aa).

2 disordered regions span residues 227-280 (THEQ…GDRE) and 795-815 (RAPS…TILY). Composition is skewed to basic and acidic residues over residues 236–262 (PPKE…KDAA) and 271–280 (NRQREPGDRE). Residues 799 to 809 (DFSTTSTSGHE) are compositionally biased toward polar residues.

Belongs to the herpesviridae CVC1 protein family. In terms of assembly, interacts (via C-terminus) with capsid vertex component 2/CVC2.

It is found in the virion. Its subcellular location is the host nucleus. In terms of biological role, capsid vertex-specific component that plays a role during viral DNA encapsidation, assuring correct genome cleavage and presumably stabilizing capsids that contain full-length viral genomes. The sequence is that of Capsid vertex component 1 from Amazona oratrix (yellow-headed parrot).